The chain runs to 93 residues: Defensin-like protein 229 (93 aa).

An N-terminal signal peptide occupies residues 1-19; sequence MKSTTLFMVSCVLIFCVLS. 4 disulfides stabilise this stretch: Cys38/Cys93, Cys48/Cys72, Cys56/Cys84, and Cys70/Cys86.

Belongs to the DEFL family. In terms of tissue distribution, flower buds.

The protein resides in the secreted. The polypeptide is Defensin-like protein 229 (SCRL27) (Arabidopsis thaliana (Mouse-ear cress)).